A 361-amino-acid chain; its full sequence is Tyrosine--tRNA ligase (361 aa).

Residues Tyr36, Tyr162, Gln166, Asp169, and Gln184 each coordinate L-tyrosine. Residues 235–239 (KMSKS) carry the 'KMSKS' region motif. Lys238 is an ATP binding site.

Belongs to the class-I aminoacyl-tRNA synthetase family. TyrS type 4 subfamily. In terms of assembly, homodimer.

Its subcellular location is the cytoplasm. It carries out the reaction tRNA(Tyr) + L-tyrosine + ATP = L-tyrosyl-tRNA(Tyr) + AMP + diphosphate + H(+). Catalyzes the attachment of tyrosine to tRNA(Tyr) in a two-step reaction: tyrosine is first activated by ATP to form Tyr-AMP and then transferred to the acceptor end of tRNA(Tyr). This is Tyrosine--tRNA ligase from Sulfolobus acidocaldarius (strain ATCC 33909 / DSM 639 / JCM 8929 / NBRC 15157 / NCIMB 11770).